Here is a 475-residue protein sequence, read N- to C-terminus: Ankyrin repeat, SAM and basic leucine zipper domain-containing protein 1 (475 aa).

The tract at residues 1 to 22 (MAAGALRGLPVAGGGESSESED) is disordered. A phosphoserine mark is found at Ser-17, Ser-18, and Ser-20. ANK repeat units follow at residues 45-74 (EKKE…SVDS), 78-107 (YGWT…NASF), 110-144 (DKQT…DPNV), 148-177 (RLMT…EVNT), 181-210 (NGYT…NKML), and 214-243 (DGKM…PLEG). The 63-residue stretch at 272 to 334 (SYTAFGDLEV…KILATLKELQ (63 aa)) folds into the SAM domain.

As to quaternary structure, interacts with DDX4, PIWIL1, RANBP9 and TDRD1.

The protein resides in the cytoplasm. Plays a central role during spermatogenesis by repressing transposable elements and preventing their mobilization, which is essential for the germline integrity. Acts via the piRNA metabolic process, which mediates the repression of transposable elements during meiosis by forming complexes composed of piRNAs and Piwi proteins and governs the methylation and subsequent repression of transposons. Its association with pi-bodies suggests a participation in the primary piRNAs metabolic process. Required prior to the pachytene stage to facilitate the production of multiple types of piRNAs, including those associated with repeats involved in the regulation of retrotransposons. May act by mediating protein-protein interactions during germ cell maturation. The sequence is that of Ankyrin repeat, SAM and basic leucine zipper domain-containing protein 1 (ASZ1) from Colobus guereza (Mantled guereza).